The chain runs to 185 residues: Probable RNA 2'-phosphotransferase (185 aa).

Belongs to the KptA/TPT1 family.

In terms of biological role, removes the 2'-phosphate from RNA via an intermediate in which the phosphate is ADP-ribosylated by NAD followed by a presumed transesterification to release the RNA and generate ADP-ribose 1''-2''-cyclic phosphate (APPR&gt;P). May function as an ADP-ribosylase. The chain is Probable RNA 2'-phosphotransferase from Rhizobium rhizogenes (strain K84 / ATCC BAA-868) (Agrobacterium radiobacter).